Consider the following 162-residue polypeptide: 2-C-methyl-D-erythritol 2,4-cyclodiphosphate synthase (162 aa).

A divalent metal cation contacts are provided by Asp-10 and His-12. Residues 10–12 (DVH) and 36–37 (HS) contribute to the 4-CDP-2-C-methyl-D-erythritol 2-phosphate site. His-44 is a binding site for a divalent metal cation. 4-CDP-2-C-methyl-D-erythritol 2-phosphate is bound by residues 58–60 (DIG), 63–67 (FPDTD), 102–108 (AQAPKMA), 134–137 (TTTE), Phe-141, and Arg-144.

It belongs to the IspF family. In terms of assembly, homotrimer. The cofactor is a divalent metal cation.

It catalyses the reaction 4-CDP-2-C-methyl-D-erythritol 2-phosphate = 2-C-methyl-D-erythritol 2,4-cyclic diphosphate + CMP. It functions in the pathway isoprenoid biosynthesis; isopentenyl diphosphate biosynthesis via DXP pathway; isopentenyl diphosphate from 1-deoxy-D-xylulose 5-phosphate: step 4/6. In terms of biological role, involved in the biosynthesis of isopentenyl diphosphate (IPP) and dimethylallyl diphosphate (DMAPP), two major building blocks of isoprenoid compounds. Catalyzes the conversion of 4-diphosphocytidyl-2-C-methyl-D-erythritol 2-phosphate (CDP-ME2P) to 2-C-methyl-D-erythritol 2,4-cyclodiphosphate (ME-CPP) with a corresponding release of cytidine 5-monophosphate (CMP). The chain is 2-C-methyl-D-erythritol 2,4-cyclodiphosphate synthase from Pseudoalteromonas atlantica (strain T6c / ATCC BAA-1087).